Here is a 316-residue protein sequence, read N- to C-terminus: Arabinooligosaccharides transport system permease protein AraP (316 aa).

The next 7 membrane-spanning stretches (helical) occupy residues 32–52 (VVPY…SFYP), 94–114 (TYMI…AVLL), 128–148 (ALFL…RLMF), 178–198 (MFLM…LYFL), 224–244 (FYVT…ISVI), 254–274 (FVFW…GYLY), and 283–303 (MGFG…ISIT). Residues 89–304 (LQNTTTYMIL…LIIFVISITQ (216 aa)) form the ABC transmembrane type-1 domain.

It belongs to the binding-protein-dependent transport system permease family. MalFG subfamily. In terms of assembly, the complex is composed of two ATP-binding proteins (MsmX), two transmembrane proteins (AraP and AraQ) and a solute-binding protein (AraN).

It localises to the cell membrane. Functionally, part of the ABC transporter complex AraNPQ involved in the uptake of arabinooligosaccharides. Responsible for the translocation of the substrate across the membrane. The protein is Arabinooligosaccharides transport system permease protein AraP (araP) of Halalkalibacterium halodurans (strain ATCC BAA-125 / DSM 18197 / FERM 7344 / JCM 9153 / C-125) (Bacillus halodurans).